We begin with the raw amino-acid sequence, 94 residues long: Small ribosomal subunit protein uS19 (94 aa).

This sequence belongs to the universal ribosomal protein uS19 family.

In terms of biological role, protein S19 forms a complex with S13 that binds strongly to the 16S ribosomal RNA. The chain is Small ribosomal subunit protein uS19 from Wolbachia pipientis subsp. Culex pipiens (strain wPip).